A 460-amino-acid polypeptide reads, in one-letter code: Probable lipid II flippase MurJ (460 aa).

Transmembrane regions (helical) follow at residues 4–24 (ILGA…PNLF), 50–70 (FASL…LLVA), 95–115 (IVAI…LGAL), 122–142 (FFAS…ALLI), 155–175 (LSYG…YPLV), 228–248 (IASF…VSYL), 257–277 (LPLA…IAIA), 292–312 (KAWF…IMLS), 336–356 (VFSL…FSLW), 366–386 (AAKI…SLMP), and 428–448 (LVIL…KSWV).

It belongs to the MurJ/MviN family.

It localises to the cell inner membrane. It participates in cell wall biogenesis; peptidoglycan biosynthesis. In terms of biological role, involved in peptidoglycan biosynthesis. Transports lipid-linked peptidoglycan precursors from the inner to the outer leaflet of the cytoplasmic membrane. In Helicobacter pylori (strain J99 / ATCC 700824) (Campylobacter pylori J99), this protein is Probable lipid II flippase MurJ.